Here is a 162-residue protein sequence, read N- to C-terminus: Protein A49R (162 aa).

This sequence belongs to the poxviridae A49 protein family. As to quaternary structure, interacts with host BTRC; this interaction inhibits NF-kappa-B activation.

It localises to the host cytoplasm. The protein localises to the host nucleus. Its function is as follows. Plays a role in the inhibition of host NF-kappa-B activation. Interacts with host BTRC and thereby diminishes ubiquitination of NF-kappa-B inhibitor alpha/NFKBIA. This stabilizes NFKBIA and its interaction with NF-kappaB, so retaining p65/RELA in the cytoplasm and preventing NF-kappa-B-dependent gene expression. The protein is Protein A49R of Bos taurus (Bovine).